Here is a 41-residue protein sequence, read N- to C-terminus: uncharacterized protein (41 aa).

Positions 1-12 (MTRNVVRQEFEA) are enriched in basic and acidic residues. The segment at 1-23 (MTRNVVRQEFEAPGKPQDSSQQD) is disordered.

This is an uncharacterized protein from Homo sapiens (Human).